A 514-amino-acid polypeptide reads, in one-letter code: MYSQQFGTVPREFKGPTPKAVIIRAKPPKAQRAEQHLKRIQRSYHKYHTTLASIKSNEENRLKCDWIQRNNHKTFDSLVQARVQDAMQGFVINTEERRNKLRELLASEENEYFSEMQLKGETIEEKKDKMRERTKLLREKKEKERQEFVAEKLDQQFRERCEELRTKLASIHEKKVVEERNAQIEFNKELKRQKLVEEHLFARLWEEDRLAKERREAQEEKRQRELVQNTRLGLDAQVTSIQAQRQGARRMKEEEARILEQNKAQIKREDEQEKLQKQKRRQETRSSLKKAVQDKIESMQREYREDLDLNMKLVGRALQDLQDEADKKKQKREEMGREQKIYNDYLMQRREEEKAQEKELNRLLEDIKAKKLAEKDRELALQRAARKQLMNEVMNTRKLQVQERLQRKLREQEELALHEQRISESLKVLHQEDMEDFARRCALAEEYRNQLQMQIAHQQQAREAEKEEERQEFEAGLAANKACLDKIQRILSENQALSQNVHPMRRGYPDKPPL.

Coiled-coil stretches lie at residues 91 to 176 (VINT…EKKV) and 205 to 478 (WEED…AGLA). 2 disordered regions span residues 261–296 (QNKA…QDKI) and 495–514 (QALS…KPPL).

This sequence belongs to the CFAP53 family. As to quaternary structure, microtubule inner protein component of sperm flagellar doublet microtubules. Interacts with PIERCE1 and PIERCE2; the interactions link outer dynein arms docking complex (ODA-DC) to the internal microtubule inner proteins (MIP) in cilium axoneme. Interacts with CCDC38. Interacts with CCDC42 and IFT88. Interacts with centriolar satellite proteins PIBF1/CEP90 and PCM1. Interacts with dyneins DNAIC1, DNAIC2 AND DNAH11 and with ODA-DC component ODAD4/TTC25. As to expression, expressed predominantly in testis (at protein level). In embryos at 8 dpc, specifically expressed in the node, in particular within the pit cells that are located at the center of the node and have rotating monocilia on their apical surface. In the adult, expressed in epithelial cells of the trachea, brain ventricles, oviduct and testis.

The protein resides in the cytoplasm. The protein localises to the cytoskeleton. It is found in the cilium axoneme. Its subcellular location is the flagellum axoneme. It localises to the microtubule organizing center. The protein resides in the centrosome. The protein localises to the centriolar satellite. It is found in the spindle pole. Functionally, microtubule inner protein (MIP) part of the dynein-decorated doublet microtubules (DMTs) in cilia axoneme, which is required for motile cilia beating. Regulates motility patterns of both 9+0 and 9+2 motile cilia through differential localization and recruitment of axonemal dynein components. Required for centriolar satellite integrity and non-motile cilium assembly. Required for motile cilium formation. Through its role in the beating of primary cilia, involved in the establishment of organ laterality during embryogenesis. Required for sperm flagellum biogenesis and is essential for male fertility. The chain is Cilia- and flagella-associated protein 53 from Mus musculus (Mouse).